The primary structure comprises 146 residues: Large ribosomal subunit protein uL15 (146 aa).

Residues 1–18 (MKLHELKPSEGSRKERNR) are compositionally biased toward basic and acidic residues. Positions 1-50 (MKLHELKPSEGSRKERNRVGRGTGSGNGKTSGRGHKGQKARSGGGVRLGF) are disordered. The segment covering 21–31 (RGTGSGNGKTS) has biased composition (gly residues).

It belongs to the universal ribosomal protein uL15 family. As to quaternary structure, part of the 50S ribosomal subunit.

Functionally, binds to the 23S rRNA. The chain is Large ribosomal subunit protein uL15 from Listeria monocytogenes serotype 4b (strain CLIP80459).